The sequence spans 472 residues: Lycopene beta cyclase, chloroplastic (472 aa).

The transit peptide at methionine 1–threonine 25 directs the protein to the chloroplast. The disordered stretch occupies residues methionine 1–serine 27. Leucine 62–proline 90 provides a ligand contact to NAD(+).

It belongs to the lycopene cyclase family. As to expression, expressed in flower buds and lips. Detected in roots and leaves.

Its subcellular location is the plastid. It localises to the chloroplast. It carries out the reaction a carotenoid psi-end group = a carotenoid beta-end derivative. Its pathway is carotenoid biosynthesis; beta-carotene biosynthesis. The protein operates within carotenoid biosynthesis; beta-zeacarotene biosynthesis. Its function is as follows. Catalyzes the double cyclization reaction which converts lycopene to beta-carotene and neurosporene to beta-zeacarotene. The protein is Lycopene beta cyclase, chloroplastic (LCY-B) of Oncidium hybrid cultivar (Orchid).